A 207-amino-acid chain; its full sequence is Small ribosomal subunit protein uS4 (207 aa).

Positions 97–160 constitute an S4 RNA-binding domain; that stretch reads SRLDNVVYRM…KKQARIVEAL (64 aa).

The protein belongs to the universal ribosomal protein uS4 family. Part of the 30S ribosomal subunit. Contacts protein S5. The interaction surface between S4 and S5 is involved in control of translational fidelity.

In terms of biological role, one of the primary rRNA binding proteins, it binds directly to 16S rRNA where it nucleates assembly of the body of the 30S subunit. Functionally, with S5 and S12 plays an important role in translational accuracy. The polypeptide is Small ribosomal subunit protein uS4 (Burkholderia mallei (strain NCTC 10247)).